Consider the following 250-residue polypeptide: Ribosomal large subunit pseudouridine synthase B (250 aa).

In terms of domain architecture, S4 RNA-binding spans 3-73 (EKIQKILSHL…FKTKIIIYNK (71 aa)). Asp-109 acts as the Nucleophile in catalysis.

Belongs to the pseudouridine synthase RsuA family.

The catalysed reaction is uridine(2605) in 23S rRNA = pseudouridine(2605) in 23S rRNA. Its function is as follows. Responsible for synthesis of pseudouridine from uracil-2605 in 23S ribosomal RNA. This Buchnera aphidicola subsp. Acyrthosiphon pisum (strain APS) (Acyrthosiphon pisum symbiotic bacterium) protein is Ribosomal large subunit pseudouridine synthase B (rluB).